A 225-amino-acid polypeptide reads, in one-letter code: Cytidylate kinase (225 aa).

11–19 (GPSGAGKGT) is an ATP binding site.

It belongs to the cytidylate kinase family. Type 1 subfamily.

The protein resides in the cytoplasm. The catalysed reaction is CMP + ATP = CDP + ADP. The enzyme catalyses dCMP + ATP = dCDP + ADP. The polypeptide is Cytidylate kinase (Mannheimia succiniciproducens (strain KCTC 0769BP / MBEL55E)).